Here is a 94-residue protein sequence, read N- to C-terminus: Long neurotoxin-like OH-31 (94 aa).

A signal peptide spans 1–19 (MKTLLLTLVVVTILCLDLG). Intrachain disulfides connect cysteine 35-cysteine 55, cysteine 37-cysteine 66, cysteine 70-cysteine 81, and cysteine 82-cysteine 87.

It belongs to the three-finger toxin family. Long-chain subfamily. Type II alpha-neurotoxin sub-subfamily. In terms of tissue distribution, expressed by the venom gland.

The protein localises to the secreted. Functionally, binds with high affinity to muscular nicotinic acetylcholine receptors (nAChRs), whereas it binds with a low affinity to neuronal alpha-7/CHRNA7 nAChRs. The sequence is that of Long neurotoxin-like OH-31 from Ophiophagus hannah (King cobra).